The primary structure comprises 105 residues: Nucleoid-associated protein Sca_0120 (105 aa).

Positions 1–36 (MRGGGNMQQMMKQMQKMQKKMAEEQEKLKDEKVEGS) are disordered. Residues 7 to 16 (MQQMMKQMQK) are compositionally biased toward low complexity. Residues 20–34 (KMAEEQEKLKDEKVE) show a composition bias toward basic and acidic residues.

Belongs to the YbaB/EbfC family. Homodimer.

The protein resides in the cytoplasm. Its subcellular location is the nucleoid. In terms of biological role, binds to DNA and alters its conformation. May be involved in regulation of gene expression, nucleoid organization and DNA protection. This chain is Nucleoid-associated protein Sca_0120, found in Staphylococcus carnosus (strain TM300).